Consider the following 821-residue polypeptide: PX domain-containing protein C1450.12 (821 aa).

A PX domain is found at Ala171–Leu310. Residues Lys235–Leu271 are disordered. Polar residues predominate over residues Tyr241–Gln268. Residues Thr260 and Thr597 each carry the phosphothreonine modification. 2 stretches are compositionally biased toward acidic residues: residues Gly737–Asp746 and Glu754–Asp766. The interval Gly737–Asp766 is disordered. Ser761 carries the post-translational modification Phosphoserine.

The protein resides in the mitochondrion membrane. This chain is PX domain-containing protein C1450.12, found in Schizosaccharomyces pombe (strain 972 / ATCC 24843) (Fission yeast).